A 380-amino-acid chain; its full sequence is Cell division protein FtsZ (380 aa).

Residues 27 to 31 (GAGNN), 119 to 121 (GTG), glutamate 150, and asparagine 189 contribute to the GTP site.

It belongs to the FtsZ family. Homodimer. Polymerizes to form a dynamic ring structure in a strictly GTP-dependent manner. Interacts directly with several other division proteins.

The protein localises to the cytoplasm. Functionally, essential cell division protein that forms a contractile ring structure (Z ring) at the future cell division site. The regulation of the ring assembly controls the timing and the location of cell division. One of the functions of the FtsZ ring is to recruit other cell division proteins to the septum to produce a new cell wall between the dividing cells. Binds GTP and shows GTPase activity. This chain is Cell division protein FtsZ, found in Mycoplasma pneumoniae (strain ATCC 29342 / M129 / Subtype 1) (Mycoplasmoides pneumoniae).